A 264-amino-acid chain; its full sequence is MKKLKLHGFNNLTKSLSFCIYDICYAKTAEERDGYIAYIDELYNANRLTEILSETCSIIGANILNIARQDYEPQGASVTILVSEEPVDPKLIDKTEHPGPLPETVVAHLDKSHICVHTYPESHPEGGLCTFRADIEVSTCGVISPLKALNYLIHQLESDIVTIDYRVRGFTRDINGMKHFIDHEINSIQNFMSDDMKALYDMVDVNVYQENIFHTKMLLKEFDLKHYMFHTKPEDLTDSERQEITAALWKEMREIYYGRNMPAV.

The Schiff-base intermediate with substrate; via pyruvic acid role is filled by Ser112. Position 112 is a pyruvic acid (Ser); by autocatalysis (Ser112). His117 functions as the Proton acceptor; for processing activity in the catalytic mechanism. Catalysis depends on Cys140, which acts as the Proton donor; for catalytic activity.

The protein belongs to the prokaryotic AdoMetDC family. Type 2 subfamily. Heterooctamer of four alpha and four beta chains arranged as a tetramer of alpha/beta heterodimers. Pyruvate is required as a cofactor. In terms of processing, is synthesized initially as an inactive proenzyme. Formation of the active enzyme involves a self-maturation process in which the active site pyruvoyl group is generated from an internal serine residue via an autocatalytic post-translational modification. Two non-identical subunits are generated from the proenzyme in this reaction, and the pyruvate is formed at the N-terminus of the alpha chain, which is derived from the carboxyl end of the proenzyme. The post-translation cleavage follows an unusual pathway, termed non-hydrolytic serinolysis, in which the side chain hydroxyl group of the serine supplies its oxygen atom to form the C-terminus of the beta chain, while the remainder of the serine residue undergoes an oxidative deamination to produce ammonia and the pyruvoyl group blocking the N-terminus of the alpha chain.

The catalysed reaction is S-adenosyl-L-methionine + H(+) = S-adenosyl 3-(methylsulfanyl)propylamine + CO2. It participates in amine and polyamine biosynthesis; S-adenosylmethioninamine biosynthesis; S-adenosylmethioninamine from S-adenosyl-L-methionine: step 1/1. Functionally, catalyzes the decarboxylation of S-adenosylmethionine to S-adenosylmethioninamine (dcAdoMet), the propylamine donor required for the synthesis of the polyamines spermine and spermidine from the diamine putrescine. In Shigella boydii serotype 4 (strain Sb227), this protein is S-adenosylmethionine decarboxylase proenzyme.